Here is a 314-residue protein sequence, read N- to C-terminus: Ribosomal protein uL3 glutamine methyltransferase (314 aa).

This sequence belongs to the protein N5-glutamine methyltransferase family. PrmB subfamily.

The enzyme catalyses L-glutaminyl-[ribosomal protein uL3] + S-adenosyl-L-methionine = N(5)-methyl-L-glutaminyl-[ribosomal protein uL3] + S-adenosyl-L-homocysteine + H(+). In terms of biological role, methylates large ribosomal subunit protein uL3 on a specific glutamine residue. This Vibrio cholerae serotype O1 (strain ATCC 39315 / El Tor Inaba N16961) protein is Ribosomal protein uL3 glutamine methyltransferase.